We begin with the raw amino-acid sequence, 494 residues long: Cytochrome P450 2A6 (494 aa).

Substrate contacts are provided by phenylalanine 107 and asparagine 297. Cysteine 439 is a binding site for heme.

This sequence belongs to the cytochrome P450 family. Heme serves as cofactor. Liver.

The protein resides in the endoplasmic reticulum membrane. Its subcellular location is the microsome membrane. It carries out the reaction 1,4-cineole + reduced [NADPH--hemoprotein reductase] + O2 = 2-exo-hydroxy-1,4-cineole + oxidized [NADPH--hemoprotein reductase] + H2O + H(+). Its function is as follows. Exhibits a high coumarin 7-hydroxylase activity. Can act in the hydroxylation of the anti-cancer drugs cyclophosphamide and ifosphamide. Competent in the metabolic activation of aflatoxin B1. Constitutes the major nicotine C-oxidase. Acts as a 1,4-cineole 2-exo-monooxygenase. Possesses low phenacetin O-deethylation activity. The polypeptide is Cytochrome P450 2A6 (CYP2A6) (Homo sapiens (Human)).